The primary structure comprises 701 residues: Dynein axonemal intermediate chain 1 (701 aa).

Disordered stretches follow at residues 1-45 (MPSK…VRPP) and 119-165 (EMVA…DIPA). 2 positions are modified to phosphoserine: Ser-124 and Ser-127. Over residues 136–155 (ENLEEEEEPKEGEGEAEAEA) the composition is skewed to acidic residues. WD repeat units lie at residues 382-422 (SSES…SQPC), 431-474 (KHTD…LVHI), 539-579 (AHNM…PMFI), 581-621 (DLNS…YEAI), and 629-668 (KKKN…RKMP).

This sequence belongs to the dynein intermediate chain family. Consists of at least two heavy chains and a number of intermediate and light chains. Interacts with BICD2. Interacts with CFAP45 and CFAP52. Interacts with CFAP53.

The protein localises to the cytoplasm. It localises to the cytoskeleton. The protein resides in the cilium axoneme. Functionally, part of the dynein complex of respiratory cilia. The polypeptide is Dynein axonemal intermediate chain 1 (Dnai1) (Mus musculus (Mouse)).